The chain runs to 433 residues: Serine hydroxymethyltransferase (433 aa).

(6S)-5,6,7,8-tetrahydrofolate contacts are provided by residues Leu132 and 136–138 (GHL). Lys241 carries the post-translational modification N6-(pyridoxal phosphate)lysine.

Belongs to the SHMT family. Homodimer. It depends on pyridoxal 5'-phosphate as a cofactor.

The protein resides in the cytoplasm. The enzyme catalyses (6R)-5,10-methylene-5,6,7,8-tetrahydrofolate + glycine + H2O = (6S)-5,6,7,8-tetrahydrofolate + L-serine. It participates in one-carbon metabolism; tetrahydrofolate interconversion. Its pathway is amino-acid biosynthesis; glycine biosynthesis; glycine from L-serine: step 1/1. In terms of biological role, catalyzes the reversible interconversion of serine and glycine with tetrahydrofolate (THF) serving as the one-carbon carrier. This reaction serves as the major source of one-carbon groups required for the biosynthesis of purines, thymidylate, methionine, and other important biomolecules. Also exhibits THF-independent aldolase activity toward beta-hydroxyamino acids, producing glycine and aldehydes, via a retro-aldol mechanism. The sequence is that of Serine hydroxymethyltransferase from Methylobacterium sp. (strain 4-46).